Consider the following 400-residue polypeptide: Elongation factor Tu (400 aa).

The tr-type G domain maps to 10 to 210; that stretch reads KPHVNVGTIG…ALDSYIPEPV (201 aa). The segment at 19-26 is G1; the sequence is GHVDHGKT. 19-26 is a GTP binding site; that stretch reads GHVDHGKT. Thr-26 is a binding site for Mg(2+). A G2 region spans residues 66–70; that stretch reads ILTIA. The tract at residues 87-90 is G3; the sequence is DCPG. Residues 87–91 and 142–145 each bind GTP; these read DCPGH and NKCD. A G4 region spans residues 142-145; sequence NKCD. Positions 180–182 are G5; the sequence is SAI.

Belongs to the TRAFAC class translation factor GTPase superfamily. Classic translation factor GTPase family. EF-Tu/EF-1A subfamily. In terms of assembly, monomer.

Its subcellular location is the cytoplasm. The enzyme catalyses GTP + H2O = GDP + phosphate + H(+). In terms of biological role, GTP hydrolase that promotes the GTP-dependent binding of aminoacyl-tRNA to the A-site of ribosomes during protein biosynthesis. The protein is Elongation factor Tu of Gemmatimonas aurantiaca (strain DSM 14586 / JCM 11422 / NBRC 100505 / T-27).